The sequence spans 77 residues: Mu-conotoxin BuIIIA (77 aa).

Positions 1–22 (MMSKLGVLLTICLLLFPLFALP) are cleaved as a signal peptide. Residues 23-51 (QDGDQPADRPAERMQDDISSEQNSLLEKR) constitute a propeptide that is removed on maturation. The segment at 26–46 (DQPADRPAERMQDDISSEQNS) is disordered. A compositionally biased stretch (basic and acidic residues) spans 28–38 (PADRPAERMQD). Intrachain disulfides connect cysteine 56–cysteine 67, cysteine 57–cysteine 73, and cysteine 63–cysteine 74. Cysteine 74 bears the Cysteine amide mark.

The protein belongs to the conotoxin M superfamily. In terms of tissue distribution, expressed by the venom duct.

The protein localises to the secreted. Functionally, mu-conotoxins block voltage-gated sodium channels (Nav). This synthetic toxin potently blocks rNav1.2/SCN2A, and rNav1.4/SCN4A. It also moderately blocks rNav1.1/SCN1A, rNav1.3/SCN3A, rNav1.5/SCN5A, and mNav1.6/SCN8A. The inhibition is reversible. This chain is Mu-conotoxin BuIIIA, found in Conus bullatus (Bubble cone).